Here is a 96-residue protein sequence, read N- to C-terminus: Small cysteine and glycine repeat-containing protein 7 (96 aa).

Residues 4–80 form a 14 X 2 AA repeats of CG region; it reads CGCGSCGGCG…TCGSCGCGCG (77 aa).

This sequence belongs to the KRTAP type 28 family.

In the hair cortex, hair keratin intermediate filaments are embedded in an interfilamentous matrix, consisting of hair keratin-associated proteins (KRTAP), which are essential for the formation of a rigid and resistant hair shaft through their extensive disulfide bond cross-linking with abundant cysteine residues of hair keratins. The matrix proteins include the high-sulfur and high-glycine-tyrosine keratins. The protein is Small cysteine and glycine repeat-containing protein 7 of Homo sapiens (Human).